A 262-amino-acid chain; its full sequence is Sulfite reductase, dissimilatory-type subunit beta (262 aa).

Residues C151, C188, C189, C193, C231, C258, and C261 each contribute to the [4Fe-4S] cluster site. Position 193 (C193) interacts with siroheme.

Heterohexamer of two alpha, two beta and two gamma subunits. Requires [4Fe-4S] cluster as cofactor. It depends on siroheme as a cofactor.

The catalysed reaction is [DsrC protein]-trisulfide + NAD(+) + 3 H2O = [DsrC protein]-dithiol + sulfite + NADH + 3 H(+). Functionally, catalyzes the reduction of sulfite to sulfide. This is the terminal oxidation reaction in sulfate respiration, a process catalyzed by the sulfate-reducing bacteria. The chain is Sulfite reductase, dissimilatory-type subunit beta (dsrB) from Megalodesulfovibrio gigas (strain ATCC 19364 / DSM 1382 / NCIMB 9332 / VKM B-1759) (Desulfovibrio gigas).